Reading from the N-terminus, the 211-residue chain is Probable GTP-binding protein EngB (211 aa).

The region spanning 21-197 is the EngB-type G domain; sequence TAPEFAFLGR…WGEIHRVAAE (177 aa). Residues 29-36, 55-59, 80-83, 147-150, and 176-178 each bind GTP; these read GRSNVGKS, GRTRA, DLPG, TKAD, and CSA. Residues serine 36 and threonine 57 each coordinate Mg(2+).

The protein belongs to the TRAFAC class TrmE-Era-EngA-EngB-Septin-like GTPase superfamily. EngB GTPase family. Mg(2+) serves as cofactor.

Its function is as follows. Necessary for normal cell division and for the maintenance of normal septation. The chain is Probable GTP-binding protein EngB from Acidobacterium capsulatum (strain ATCC 51196 / DSM 11244 / BCRC 80197 / JCM 7670 / NBRC 15755 / NCIMB 13165 / 161).